A 279-amino-acid chain; its full sequence is 3-methyl-2-oxobutanoate hydroxymethyltransferase (279 aa).

D43 and D82 together coordinate Mg(2+). 3-methyl-2-oxobutanoate-binding positions include 43 to 44 (DS), D82, and K112. A Mg(2+)-binding site is contributed by E114. E181 acts as the Proton acceptor in catalysis.

The protein belongs to the PanB family. Homodecamer; pentamer of dimers. Mg(2+) serves as cofactor.

Its subcellular location is the cytoplasm. It carries out the reaction 3-methyl-2-oxobutanoate + (6R)-5,10-methylene-5,6,7,8-tetrahydrofolate + H2O = 2-dehydropantoate + (6S)-5,6,7,8-tetrahydrofolate. It functions in the pathway cofactor biosynthesis; (R)-pantothenate biosynthesis; (R)-pantoate from 3-methyl-2-oxobutanoate: step 1/2. Functionally, catalyzes the reversible reaction in which hydroxymethyl group from 5,10-methylenetetrahydrofolate is transferred onto alpha-ketoisovalerate to form ketopantoate. In Geobacillus kaustophilus (strain HTA426), this protein is 3-methyl-2-oxobutanoate hydroxymethyltransferase.